A 563-amino-acid chain; its full sequence is MNKIYYILFLSAQCLVHMGKCERNQKTTRLTRSANNASLEKGPIIERSIRMSNPWKAFMEKYDLERAHNSGIRIDLGEDAEVGNSKYRIPAGKCPVFGKGIVIENSNVSFLTPVATGAQRLKEGGFAFPNADDHISPITIANLKERYKENADLMKLNDIALCKTHAASFVIAEDQNTSYRHPAVYDEKNKTCYMLYLSAQENMGPRYCSPDSQNKDAMFCFKPDKNENFDNLVYLSKNVSNDWENKCPRKNLGNAKFGLWVDGNCEEIPYVNEVEARSLRECNRIVFEASASDQPRQYEEELTDYEKIQEGFRQNNRDMIKSAFLPVGAFNSDNFKSKGRGYNWANFDSVNNKCYIFNTKPTCLINDKNFFATTALSHPQEVDNEFPCSIYKDEIEREIKKQSRNMNLYSVDKERIVLPRIFISTDKESIKCPCEPEHISNSTCNFYVCNCVEKRAEIKENNEVIIKEEFKEDYENPDGKHKKKMLLIIIGVTGAVCVVAVASLFYFRKKAQDDKYDKMDQAEAYGKTANTRKDEMLDPEASFWGEDKRASHTTPVLMEKPYY.

The first 13 residues, 1–13 (MNKIYYILFLSAQ), serve as a signal peptide directing secretion. The Extracellular segment spans residues 14–487 (CLVHMGKCER…DGKHKKKMLL (474 aa)). 6 N-linked (GlcNAc...) asparagine glycosylation sites follow: Asn36, Asn107, Asn176, Asn189, Asn238, and Asn441. A helical membrane pass occupies residues 488–508 (IIIGVTGAVCVVAVASLFYFR). The Cytoplasmic segment spans residues 509–563 (KKAQDDKYDKMDQAEAYGKTANTRKDEMLDPEASFWGEDKRASHTTPVLMEKPYY).

This sequence belongs to the apicomplexan parasites AMA1 family.

Its subcellular location is the membrane. In terms of biological role, merozoite receptor PK66 is a surface antigen involved in parasite invasion of erythrocytes. This chain is Merozoite receptor PK66 (PK66), found in Plasmodium knowlesi (strain nuri).